Here is a 249-residue protein sequence, read N- to C-terminus: 2,3-bisphosphoglycerate-dependent phosphoglycerate mutase (249 aa).

Substrate is bound by residues 9 to 16 (RHGQSQWN), 22 to 23 (TG), Arg61, 88 to 91 (ERHY), Lys99, 115 to 116 (RR), and 184 to 185 (GN). Residue His10 is the Tele-phosphohistidine intermediate of the active site. Glu88 (proton donor/acceptor) is an active-site residue.

It belongs to the phosphoglycerate mutase family. BPG-dependent PGAM subfamily. In terms of assembly, homodimer.

The enzyme catalyses (2R)-2-phosphoglycerate = (2R)-3-phosphoglycerate. The protein operates within carbohydrate degradation; glycolysis; pyruvate from D-glyceraldehyde 3-phosphate: step 3/5. Functionally, catalyzes the interconversion of 2-phosphoglycerate and 3-phosphoglycerate. This chain is 2,3-bisphosphoglycerate-dependent phosphoglycerate mutase, found in Xanthomonas axonopodis pv. citri (strain 306).